The chain runs to 173 residues: Photosystem I assembly protein Ycf3 (173 aa).

3 TPR repeats span residues 36-69 (AFAYYRDGMAAQSEGEYAEALENYREALALEQGE), 73-106 (SYILYNMGLIYQSNGELDKALEYYHQALELNPRL), and 121-154 (GELSLQAGDEETAEALFNEAAQYWIRAIRIAPNN).

Belongs to the Ycf3 family.

It is found in the cellular thylakoid membrane. Its function is as follows. Essential for the assembly of the photosystem I (PSI) complex. May act as a chaperone-like factor to guide the assembly of the PSI subunits. In Synechococcus sp. (strain JA-2-3B'a(2-13)) (Cyanobacteria bacterium Yellowstone B-Prime), this protein is Photosystem I assembly protein Ycf3.